The primary structure comprises 395 residues: MGTAPAYSLDGGRSLHRWLRDMREHHPVHRELLTRVWTLYRYRDITQATADPAVFSSELWRYLPGDRGDDALTAGNLTAMDPPRHRLVRDLVSRSFTARAVGALRPRIAAIAAELIGAVADRGEMDVVADLSDPLPVLVIGELLGLPMADRELLSDWARRLLSFDKGDLTDEVVRKRVADTQQELLDYLRVHCRRRRTNPQDDLISRLIRAEVDGQRLTEDEVVNFANLLLLAGHVTTTLLLANIVLTLDEHPAVAAEARADRGLIPGLIEETLRYRPVIVSNMRVTTRAVTVGTEQLPAGQLVSLSFISGNRDEQYFTDPDRFDIHRDARKHLGFGHGIHYCLGAPLARLELGIALDAMFDRFSRIEVTGVPVDYYDTPGVAGPRSLRIAFRHH.

This sequence belongs to the cytochrome P450 family.

Cytochrome P450; part of the gene cluster that mediates the biosynthesis of cyclic heptapeptides, known as cyclomarins and also of cyclic dipeptides, called cyclomarazines, which have both antimicrobial and cytotoxic effects. First, CymD catalyzes the reverse N-prenylation of monomeric L-tryptophan with dimethylallyl diphosphate (DMAPP) to form N-(1,1-dimethylallyl)-tryptophan (r-N-DMAT). The N-(1,1-dimethylallyl)-tryptophan produced by CymD is then combined with a range of standard and nonproteinogenic amino acid substrates to synthesize the peptides, a process that is probably catalyzed by the non-canonical nonribosomal peptide synthetase (NRPS), CymA. Other proteins in the cluster catalyze further modifications of the peptides including CymV which catalyzes the oxidation of olefinic cyclomarins and cyclomarazines to their respective epoxide derivatives. The polypeptide is Cyclomarin C epoxidase CymV (Salinispora arenicola (strain CNS-205)).